We begin with the raw amino-acid sequence, 55 residues long: Preprotein translocase subunit SecG (55 aa).

Residues 1 to 31 are Cytoplasmic-facing; that stretch reads MPKNNTNENFQSGAGLIRYFNEEEIKGPALD. The chain crosses the membrane as a helical span at residues 32–51; sequence PKLIIYIGIAMAVIVELAKI. Topologically, residues 52–55 are extracellular; that stretch reads FWPV.

It belongs to the SEC61-beta family. As to quaternary structure, component of the protein translocase complex. Heterotrimer consisting of alpha (SecY), beta (SecG) and gamma (SecE) subunits. Can form oligomers of the heterotrimer.

The protein resides in the cell membrane. Its function is as follows. Involved in protein export. The function of the beta subunit is unknown, but it may be involved in stabilization of the trimeric complex. In Picrophilus torridus (strain ATCC 700027 / DSM 9790 / JCM 10055 / NBRC 100828 / KAW 2/3), this protein is Preprotein translocase subunit SecG.